A 99-amino-acid polypeptide reads, in one-letter code: Small ribosomal subunit protein uS17 (99 aa).

It belongs to the universal ribosomal protein uS17 family. Part of the 30S ribosomal subunit.

One of the primary rRNA binding proteins, it binds specifically to the 5'-end of 16S ribosomal RNA. In Thermosipho africanus (strain TCF52B), this protein is Small ribosomal subunit protein uS17.